A 433-amino-acid polypeptide reads, in one-letter code: Energy-coupling factor transporter ATP-binding protein EcfA2 (433 aa).

Residues 25–389 (VRVKNLYAVY…QHIINSTSIQ (365 aa)) form the ABC transporter domain. 62–69 (GNSGSGKS) contacts ATP.

It belongs to the ABC transporter superfamily. Energy-coupling factor EcfA family. As to quaternary structure, forms a stable energy-coupling factor (ECF) transporter complex composed of 2 membrane-embedded substrate-binding proteins (S component), 2 ATP-binding proteins (A component) and 2 transmembrane proteins (T component).

It localises to the cell membrane. In terms of biological role, ATP-binding (A) component of a common energy-coupling factor (ECF) ABC-transporter complex. Unlike classic ABC transporters this ECF transporter provides the energy necessary to transport a number of different substrates. The sequence is that of Energy-coupling factor transporter ATP-binding protein EcfA2 from Ureaplasma parvum serovar 3 (strain ATCC 700970).